Reading from the N-terminus, the 316-residue chain is RNA interference defective protein 11 (316 aa).

The RING-type; degenerate zinc finger occupies 183–218; it reads CYINFNCQTSKVMFGCGHVYCEQCLNSWNDKPCSVC.

In terms of assembly, interacts (via RING-type zinc finger domain) with rde-10.

In complex with rde-10, required in the endogenous and exogenous siRNA pathway for biogenesis and accumulation of secondary small interfering RNA (siRNA) intermediates, such as 22G-siRNAs derived from ergo-1 targets. The polypeptide is RNA interference defective protein 11 (Caenorhabditis elegans).